Reading from the N-terminus, the 115-residue chain is NADH-ubiquinone oxidoreductase chain 3 (115 aa).

3 helical membrane-spanning segments follow: residues 3–23 (LMATLLTNTMLTSLMVLIAFW), 55–75 (FFLVAITFLLFDLEIALLLPL), and 86–106 (LTLLMSFMLIILLAIGLAYEW).

Belongs to the complex I subunit 3 family. Core subunit of respiratory chain NADH dehydrogenase (Complex I) which is composed of 45 different subunits. Interacts with TMEM186. Interacts with TMEM242.

The protein resides in the mitochondrion inner membrane. The catalysed reaction is a ubiquinone + NADH + 5 H(+)(in) = a ubiquinol + NAD(+) + 4 H(+)(out). Core subunit of the mitochondrial membrane respiratory chain NADH dehydrogenase (Complex I) which catalyzes electron transfer from NADH through the respiratory chain, using ubiquinone as an electron acceptor. Essential for the catalytic activity of complex I. The chain is NADH-ubiquinone oxidoreductase chain 3 from Mammuthus primigenius (Siberian woolly mammoth).